The chain runs to 103 residues: Large ribosomal subunit protein bL21 (103 aa).

Belongs to the bacterial ribosomal protein bL21 family. As to quaternary structure, part of the 50S ribosomal subunit. Contacts protein L20.

This protein binds to 23S rRNA in the presence of protein L20. This chain is Large ribosomal subunit protein bL21, found in Clostridium acetobutylicum (strain ATCC 824 / DSM 792 / JCM 1419 / IAM 19013 / LMG 5710 / NBRC 13948 / NRRL B-527 / VKM B-1787 / 2291 / W).